Reading from the N-terminus, the 423-residue chain is Deferrochelatase (423 aa).

A signal peptide (tat-type signal) is located at residues 1 to 35; sequence MQYEDKNGVNEPSRRRLLKGIGALALAGSCPVAHA. Residues 236 to 238, His-329, 334 to 336, and Arg-347 each bind heme b; these read GTA and NPR.

It belongs to the DyP-type peroxidase family. EfeB subfamily. The heme-bound EfeB forms a homodimer whereas the apo-form mainly exists as a monomer. Part of a ferrous iron transporter composed of EfeU, EfeO and EfeB. The cofactor is heme b. Predicted to be exported by the Tat system. The position of the signal peptide cleavage has not been experimentally proven.

Its subcellular location is the periplasm. The catalysed reaction is heme b + 2 H(+) = protoporphyrin IX + Fe(2+). In terms of biological role, involved in the recovery of exogenous heme iron. Extracts iron from heme while preserving the protoporphyrin ring intact. Also displays peroxidase activity on guaiacol and catechol in vitro. The deferrochelatase activity appears to be closely related to the peroxidation activity, but the link is unclear. In Escherichia coli O157:H7, this protein is Deferrochelatase (efeB).